The primary structure comprises 373 residues: 4-hydroxy-3-methylbut-2-en-1-yl diphosphate synthase (flavodoxin) (373 aa).

[4Fe-4S] cluster is bound by residues Cys269, Cys272, Cys304, and Glu311.

This sequence belongs to the IspG family. [4Fe-4S] cluster is required as a cofactor.

The catalysed reaction is (2E)-4-hydroxy-3-methylbut-2-enyl diphosphate + oxidized [flavodoxin] + H2O + 2 H(+) = 2-C-methyl-D-erythritol 2,4-cyclic diphosphate + reduced [flavodoxin]. The protein operates within isoprenoid biosynthesis; isopentenyl diphosphate biosynthesis via DXP pathway; isopentenyl diphosphate from 1-deoxy-D-xylulose 5-phosphate: step 5/6. Functionally, converts 2C-methyl-D-erythritol 2,4-cyclodiphosphate (ME-2,4cPP) into 1-hydroxy-2-methyl-2-(E)-butenyl 4-diphosphate. This chain is 4-hydroxy-3-methylbut-2-en-1-yl diphosphate synthase (flavodoxin), found in Baumannia cicadellinicola subsp. Homalodisca coagulata.